A 530-amino-acid polypeptide reads, in one-letter code: UDP-N-acetylmuramoyl-L-alanyl-D-glutamate--2,6-diaminopimelate ligase (530 aa).

Serine 21 lines the UDP-N-acetyl-alpha-D-muramoyl-L-alanyl-D-glutamate pocket. Position 99 to 105 (glycine 99 to serine 105) interacts with ATP. UDP-N-acetyl-alpha-D-muramoyl-L-alanyl-D-glutamate-binding positions include threonine 145–threonine 146, serine 172, glutamine 178, and arginine 180. N6-carboxylysine is present on lysine 212. The region spanning phenylalanine 221–leucine 269 is the RPE1 insert domain. Residues arginine 422, aspartate 446–arginine 449, glycine 496, and glutamate 500 contribute to the meso-2,6-diaminopimelate site. Residues aspartate 446–arginine 449 carry the Meso-diaminopimelate recognition motif motif.

It belongs to the MurCDEF family. MurE subfamily. Mg(2+) serves as cofactor. In terms of processing, carboxylation is probably crucial for Mg(2+) binding and, consequently, for the gamma-phosphate positioning of ATP.

The protein localises to the cytoplasm. It catalyses the reaction UDP-N-acetyl-alpha-D-muramoyl-L-alanyl-D-glutamate + meso-2,6-diaminopimelate + ATP = UDP-N-acetyl-alpha-D-muramoyl-L-alanyl-gamma-D-glutamyl-meso-2,6-diaminopimelate + ADP + phosphate + H(+). It participates in cell wall biogenesis; peptidoglycan biosynthesis. Functionally, catalyzes the addition of meso-diaminopimelic acid to the nucleotide precursor UDP-N-acetylmuramoyl-L-alanyl-D-glutamate (UMAG) in the biosynthesis of bacterial cell-wall peptidoglycan. The sequence is that of UDP-N-acetylmuramoyl-L-alanyl-D-glutamate--2,6-diaminopimelate ligase from Rickettsia felis (strain ATCC VR-1525 / URRWXCal2) (Rickettsia azadi).